The sequence spans 146 residues: Large ribosomal subunit protein uL13 (146 aa).

The protein belongs to the universal ribosomal protein uL13 family. Part of the 50S ribosomal subunit.

Its function is as follows. This protein is one of the early assembly proteins of the 50S ribosomal subunit, although it is not seen to bind rRNA by itself. It is important during the early stages of 50S assembly. This Mycoplasma pneumoniae (strain ATCC 29342 / M129 / Subtype 1) (Mycoplasmoides pneumoniae) protein is Large ribosomal subunit protein uL13.